The following is an 88-amino-acid chain: Phosphocarrier protein HPr (88 aa).

The region spanning 1–88 (MEKREFNIIA…DTMKKEGLAE (88 aa)) is the HPr domain. Histidine 15 functions as the Pros-phosphohistidine intermediate in the catalytic mechanism. Position 46 is a phosphoserine; by HPrK/P (serine 46).

The protein belongs to the HPr family.

Its subcellular location is the cytoplasm. Phosphorylation on Ser-46 inhibits the phosphoryl transfer from enzyme I to HPr. Its function is as follows. General (non sugar-specific) component of the phosphoenolpyruvate-dependent sugar phosphotransferase system (sugar PTS). This major carbohydrate active-transport system catalyzes the phosphorylation of incoming sugar substrates concomitantly with their translocation across the cell membrane. The phosphoryl group from phosphoenolpyruvate (PEP) is transferred to the phosphoryl carrier protein HPr by enzyme I. Phospho-HPr then transfers it to the PTS EIIA domain. Functionally, P-Ser-HPr interacts with the catabolite control protein A (CcpA), forming a complex that binds to DNA at the catabolite response elements cre, operator sites preceding a large number of catabolite-regulated genes. Thus, P-Ser-HPr is a corepressor in carbon catabolite repression (CCR), a mechanism that allows bacteria to coordinate and optimize the utilization of available carbon sources. P-Ser-HPr also plays a role in inducer exclusion, in which it probably interacts with several non-PTS permeases and inhibits their transport activity. The sequence is that of Phosphocarrier protein HPr (ptsH) from Lacticaseibacillus casei (Lactobacillus casei).